The chain runs to 172 residues: MTFDIYIPENLAFSDYIAVIQVARTWADAQDRKDPERFLATVAPEVTIDYSLLIPAWKSKVYTADEFVATWLAPDRVGLSVLATQHLLGMPYIKSATRDEIVVEFQEVASHGRRQDDDGAFGGKIGETADGRGWVEHRYVKIDGQWKIDLIKPSIIYMAGDWERVRRAEGAE.

Catalysis depends on residues His-86 and His-111.

The protein belongs to the scytalone dehydratase family. Homotrimer. Each subunit contains an active site, located in the central part of the hydrophobic core of the monomer, which functions independently.

It participates in secondary metabolite biosynthesis; flavonoid biosynthesis. Cytochrome P450 monooxygenase; part of the gene cluster that mediates the biosynthesis of chlorflavonin, a fungal flavonoid with acetolactate synthase inhibitory activity. Within the pathway, cfoI is responsible for the hydroxylation of the flavonoid skeleton at position C3 with cfoF. The pathway begins with the PKS-NRPS hybrid synthetase cfoA that uses benzoic acid or p-hydroxybenzoic acid as a starter unit with four rounds of chain elongation using malonyl-CoA to form the chalcone skeleton. Then, a new type of chalcone isomerase, cfoK, catalyzes the conversion of the chalcone into a flavanone by a histidine-mediated oxa-Michael addition mechanism. The desaturation of flavanone to flavone is catalyzed by a new type of flavone synthase, the flavin mononucleotide (FMN)-dependent oxidoreductase cfoJ. Monooxygenases cfoF, cfoG, and P450 cfoH are responsible for the hydroxylation of the flavonoid skeleton at sites C3, C8, and C2', respectively. Like cfoF, the dehydratase cfoI plays also a role in the hydroxylation of position C3. Methyltransferases cfoB, cfoC, and cfoD then catalyze the methylation of C7-OH, C8-OH, and C3-OH, respectively. Finally, the monooxygenase cfoE is responsible for the chlorination of flavonoid at position C3'. In Aspergillus candidus, this protein is Dehydratase cfoI.